A 211-amino-acid polypeptide reads, in one-letter code: 2,3-bisphosphoglycerate-dependent phosphoglycerate mutase (211 aa).

Substrate-binding positions include 9–16 (RHGQSDWN), 22–23 (TG), arginine 61, 88–91 (ERDY), lysine 99, 115–116 (RR), and 159–160 (GN). Histidine 10 (tele-phosphohistidine intermediate) is an active-site residue. Residue glutamate 88 is the Proton donor/acceptor of the active site.

Belongs to the phosphoglycerate mutase family. BPG-dependent PGAM subfamily. In terms of assembly, homodimer.

It carries out the reaction (2R)-2-phosphoglycerate = (2R)-3-phosphoglycerate. Its pathway is carbohydrate degradation; glycolysis; pyruvate from D-glyceraldehyde 3-phosphate: step 3/5. Catalyzes the interconversion of 2-phosphoglycerate and 3-phosphoglycerate. This Allorhizobium ampelinum (strain ATCC BAA-846 / DSM 112012 / S4) (Agrobacterium vitis (strain S4)) protein is 2,3-bisphosphoglycerate-dependent phosphoglycerate mutase.